Reading from the N-terminus, the 276-residue chain is Putative metal-binding protein CT_415 (276 aa).

Positions 1-18 (MRLLFLLLFSLGITCSYG) are cleaved as a signal peptide. 4 residues coordinate a divalent metal cation: His59, His121, His185, and Asp256.

It belongs to the bacterial solute-binding protein 9 family.

Its subcellular location is the periplasm. Its function is as follows. Part of an ATP-binding cassette (ABC) transport system involved in metal import. Binds a metal with high affinity and specificity and delivers it to the membrane permease for translocation into the cytoplasm. This is Putative metal-binding protein CT_415 from Chlamydia trachomatis serovar D (strain ATCC VR-885 / DSM 19411 / UW-3/Cx).